We begin with the raw amino-acid sequence, 586 residues long: Estrogen receptor (586 aa).

Residues 1–179 (MTMPLPNKTT…SMESTKETRY (179 aa)) form a modulating region. The segment at 144–173 (FYRSSSDNRRQSGRERMSSANDKGPPSMES) is disordered. The span at 149–160 (SDNRRQSGRERM) shows a compositional bias: basic and acidic residues. 2 NR C4-type zinc fingers span residues 180-200 (CAVCSDYASGYHYGVWSCEGC) and 216-240 (CPATNQCTIDKNRRKSCQACRLRKC). Positions 180–245 (CAVCSDYASG…RLRKCYEVGM (66 aa)) form a DNA-binding region, nuclear receptor. Residues 246 to 302 (MKGGIRKDRRGGRLLKHKRQKEEQEQKNDVDPSEIRTASIWVNPSVKSMKLSPVLSL) are hinge. Residues 252 to 264 (KDRRGGRLLKHKR) are compositionally biased toward basic residues. The tract at residues 252 to 276 (KDRRGGRLLKHKRQKEEQEQKNDVD) is disordered. Basic and acidic residues predominate over residues 265–276 (QKEEQEQKNDVD). The region spanning 303–539 (TAEQLISALM…DLLLEMLDAH (237 aa)) is the NR LBD domain. The segment covering 543-556 (TPKDKTTTQEEDSR) has biased composition (basic and acidic residues). Residues 543-569 (TPKDKTTTQEEDSRSPPTTTVNGASPC) form a disordered region.

The protein belongs to the nuclear hormone receptor family. NR3 subfamily. As to quaternary structure, binds DNA as a homodimer. Can form a heterodimer with ER-beta.

It localises to the nucleus. In terms of biological role, the steroid hormones and their receptors are involved in the regulation of eukaryotic gene expression and affect cellular proliferation and differentiation in target tissues. This is Estrogen receptor (esr1) from Xenopus laevis (African clawed frog).